The chain runs to 314 residues: Phospho-N-acetylmuramoyl-pentapeptide-transferase (314 aa).

10 helical membrane passes run 4-24 (LIFY…PIFI), 52-72 (TMGG…TYFI), 77-97 (LFLI…LDDY), 111-131 (IQKL…ISIF), 146-166 (LDLK…MSNA), 169-189 (LTDG…LFTA), 191-211 (IAGI…AYLF), 219-239 (IFMG…LALY), 242-262 (VELF…SVII), and 294-314 (IVLI…GGVL).

It belongs to the glycosyltransferase 4 family. MraY subfamily. The cofactor is Mg(2+).

It localises to the cell inner membrane. It carries out the reaction UDP-N-acetyl-alpha-D-muramoyl-L-alanyl-gamma-D-glutamyl-meso-2,6-diaminopimeloyl-D-alanyl-D-alanine + di-trans,octa-cis-undecaprenyl phosphate = di-trans,octa-cis-undecaprenyl diphospho-N-acetyl-alpha-D-muramoyl-L-alanyl-D-glutamyl-meso-2,6-diaminopimeloyl-D-alanyl-D-alanine + UMP. The protein operates within cell wall biogenesis; peptidoglycan biosynthesis. Its function is as follows. Catalyzes the initial step of the lipid cycle reactions in the biosynthesis of the cell wall peptidoglycan: transfers peptidoglycan precursor phospho-MurNAc-pentapeptide from UDP-MurNAc-pentapeptide onto the lipid carrier undecaprenyl phosphate, yielding undecaprenyl-pyrophosphoryl-MurNAc-pentapeptide, known as lipid I. The chain is Phospho-N-acetylmuramoyl-pentapeptide-transferase from Petrotoga mobilis (strain DSM 10674 / SJ95).